A 984-amino-acid chain; its full sequence is MLQGVSDLSIKQLLLGVNNVGSVHLSDIPSTRARNFLRGTDPTSFKQTCRALEKIKNSCTESDFKKALLFVRSSSLFDGTEIGQLFIDRCPNESNELDVKYSLSEILRYINQFADELIVLSDCAAKIIKHIDKGNYGTALDYCSNLADMKGTSVFLIRQLSYITNRYQLLELDDSEILRKIDYMKQRISLSRSSFLEGAVTQLSNLRTSYIATSKRIQDIKEDFQGKEIAKSFVQPIPSNLHEFESVLSDYFSFSLFDAFLYIAKFQSFSLQYLPSNQLDVDLFLSYKKISSIKFSPEKMYKTVDEDAGYYYFRESFLFNEQKGALRFQSIHGYYYYDAFRSNLKNLIQKQLVNDYFSNVNSLEQLKYTNSDNYVVKSEKYDSTTCGMLENSTALIHLLERKQGKLDTREQELFVELMSYTRDVGEVCPKEILATISSIAQCFRLKLVVNCLITINNKTQVSEHQLRSTIQDYCIEKFGGDLNLLIQHLYDISPAVAEHLLLTCDEKFLATLFRIVDRPVDAIKVRADMLYWYGKISSEERYLDRAKMLKIDIQINKEKGTIDDSRIYVDPFKYTQWFEDQMVGKLTMAIDNLLISEHAVVNPNWKHMGVGTTGDVIELLLACYKEFCDNKSFGIASYLGRRIRHGTFEGTASTELKALYTNEEYKHLFEDKEFATKFDEWLNQYELMISELKKNALQIKSKRKPSGCFSTDIDTPQKKIVADQLIFEILRIYSKRSGVIRLPSVIIDYCWRLVELDLTATKKLLSEKKSSHGVFSYTPKFGSSSYKRQYSKFSQEVNSLTSQKFGLMASWFNKPNYASPSTDIYLLFNAVISEVKDSFRDFEPKIDQGQRSFTINGGTYYVIYDALFVLIHNAARHGKSDGKMNFFVSIPEDRTNAIRLQLFTELDSIDSVDKALSNIEEALLNTQGDADEFDNKSGMKKLKKLENEGSISELQFYSKPEENMLCFDFHFELDSRGKYDDLDS.

H645 carries the phosphohistidine; by autocatalysis modification.

In terms of processing, autophosphorylated.

The enzyme catalyses ATP + protein L-histidine = ADP + protein N-phospho-L-histidine.. In terms of biological role, sensor-kinase member of the two-component regulatory system Detocs that confers resistance to bacteriophage. When the system (DtcA-DtcB-DtcC) is expressed in a susceptible E.coli (strain MG1655) it confers resistance to bacteriophages T2, T4, T5, T6 and SECphi27. Detocs inhibits T5 infection leading to growth arrest but not complete cell lysis, during SECphi27 infection leads to cell lysis. DtcA (this subunit) probably autophosphorylates upon sensing viral infection, and subsequently transfers the phosphate signal to DtcC which activates it, leading to an antiviral defense; DtcB may scavenge phosphorylation signals from accidental activation of DtcA. The protein is Detocs histidine-protein kinase DtcA of Vibrio alginolyticus.